A 515-amino-acid chain; its full sequence is Maturase K (515 aa).

This sequence belongs to the intron maturase 2 family. MatK subfamily.

It is found in the plastid. It localises to the chloroplast. Its function is as follows. Usually encoded in the trnK tRNA gene intron. Probably assists in splicing its own and other chloroplast group II introns. This is Maturase K from Pinus armandii (Chinese white pine).